A 429-amino-acid polypeptide reads, in one-letter code: Probable M18 family aminopeptidase 2 (429 aa).

Zn(2+)-binding residues include His-82, His-156, and His-401.

This sequence belongs to the peptidase M18 family. Zn(2+) serves as cofactor.

In Pseudomonas entomophila (strain L48), this protein is Probable M18 family aminopeptidase 2.